Consider the following 400-residue polypeptide: S-adenosylmethionine sensor upstream of mTORC1 (400 aa).

S-adenosyl-L-methionine contacts are provided by Arg-99, Gly-168, Asp-186, Asp-198, Phe-199, and Ser-240.

Belongs to the BMT2/SAMTOR family. As to quaternary structure, interacts with the GATOR1 complex; interaction is disrupted when samtor binds S-adenosyl-L-methionine. Interacts with the KICSTOR complex; interaction is disrupted when samtor binds S-adenosyl-L-methionine.

In terms of biological role, S-adenosyl-L-methionine-binding protein that acts as an inhibitor of mTORC1 signaling via interaction with the GATOR1 and KICSTOR complexes. Acts as a sensor of S-adenosyl-L-methionine to signal methionine sufficiency to mTORC1: in presence of methionine, binds S-adenosyl-L-methionine, leading to disrupt interaction with the GATOR1 and KICSTOR complexes and promote mTORC1 signaling. Upon methionine starvation, S-adenosyl-L-methionine levels are reduced, thereby promoting the association with GATOR1 and KICSTOR, leading to inhibit mTORC1 signaling. Probably also acts as a S-adenosyl-L-methionine-dependent methyltransferase. The polypeptide is S-adenosylmethionine sensor upstream of mTORC1 (Xenopus laevis (African clawed frog)).